Reading from the N-terminus, the 254-residue chain is Cytochrome c oxidase subunit 2 (254 aa).

Over 12-38 (DAPEPWQICYQDSATKIMSGIDKLTGE) the chain is Mitochondrial intermembrane. The helical transmembrane segment at 39–59 (IFYYETLLLIIVGWVLISAII) threads the bilayer. The Mitochondrial matrix segment spans residues 60-73 (KYTKTELSYKYFNH). The chain crosses the membrane as a helical span at residues 74 to 94 (GTLIEILWTCSPAFILIAISF). Residues 95–248 (PSFKLLYLMD…KYLEWLNIHL (154 aa)) are Mitochondrial intermembrane-facing. Cu cation contacts are provided by H182, C217, E219, C221, H225, and M228. Residue E219 participates in Mg(2+) binding.

It belongs to the cytochrome c oxidase subunit 2 family. As to quaternary structure, component of the cytochrome c oxidase (complex IV, CIV), a multisubunit enzyme composed of a catalytic core of 3 subunits and several supernumerary subunits. The complex exists as a monomer or a dimer and forms supercomplexes (SCs) in the inner mitochondrial membrane with ubiquinol-cytochrome c oxidoreductase (cytochrome b-c1 complex, complex III, CIII). Cu cation serves as cofactor.

The protein resides in the mitochondrion inner membrane. The catalysed reaction is 4 Fe(II)-[cytochrome c] + O2 + 8 H(+)(in) = 4 Fe(III)-[cytochrome c] + 2 H2O + 4 H(+)(out). Functionally, component of the cytochrome c oxidase, the last enzyme in the mitochondrial electron transport chain which drives oxidative phosphorylation. The respiratory chain contains 3 multisubunit complexes succinate dehydrogenase (complex II, CII), ubiquinol-cytochrome c oxidoreductase (cytochrome b-c1 complex, complex III, CIII) and cytochrome c oxidase (complex IV, CIV), that cooperate to transfer electrons derived from NADH and succinate to molecular oxygen, creating an electrochemical gradient over the inner membrane that drives transmembrane transport and the ATP synthase. Cytochrome c oxidase is the component of the respiratory chain that catalyzes the reduction of oxygen to water. Electrons originating from reduced cytochrome c in the intermembrane space (IMS) are transferred via the dinuclear copper A center (CU(A)) of subunit 2 and heme A of subunit 1 to the active site in subunit 1, a binuclear center (BNC) formed by heme A3 and copper B (CU(B)). The BNC reduces molecular oxygen to 2 water molecules using 4 electrons from cytochrome c in the IMS and 4 protons from the mitochondrial matrix. The polypeptide is Cytochrome c oxidase subunit 2 (Zancudomyces culisetae (Gut fungus)).